A 330-amino-acid polypeptide reads, in one-letter code: Aspartate--ammonia ligase (330 aa).

It belongs to the class-II aminoacyl-tRNA synthetase family. AsnA subfamily.

It is found in the cytoplasm. The enzyme catalyses L-aspartate + NH4(+) + ATP = L-asparagine + AMP + diphosphate + H(+). Its pathway is amino-acid biosynthesis; L-asparagine biosynthesis; L-asparagine from L-aspartate (ammonia route): step 1/1. In Streptococcus pyogenes serotype M49 (strain NZ131), this protein is Aspartate--ammonia ligase.